Consider the following 353-residue polypeptide: Lipase ZK262.3 (353 aa).

Positions M1–G22 are cleaved as a signal peptide. Residues N32 and N64 are each glycosylated (N-linked (GlcNAc...) asparagine). Catalysis depends on S163, which acts as the Nucleophile. Residue D221 is the Charge relay system of the active site. The N-linked (GlcNAc...) asparagine glycan is linked to N267. A disulfide bridge links C277 with C288. The active-site Charge relay system is the H306.

This sequence belongs to the AB hydrolase superfamily. Lipase family.

It is found in the secreted. Its function is as follows. Probable lipase. The sequence is that of Lipase ZK262.3 from Caenorhabditis elegans.